The primary structure comprises 278 residues: Glucosamine-6-phosphate deaminase (278 aa).

Residue D72 is the Proton acceptor; for enolization step of the active site. D141 (for ring-opening step) is an active-site residue. H143 (proton acceptor; for ring-opening step) is an active-site residue. The For ring-opening step role is filled by E148.

Belongs to the glucosamine/galactosamine-6-phosphate isomerase family. In terms of assembly, homohexamer.

The protein localises to the cytoplasm. It carries out the reaction alpha-D-glucosamine 6-phosphate + H2O = beta-D-fructose 6-phosphate + NH4(+). The protein operates within nucleotide-sugar biosynthesis; UDP-N-acetyl-alpha-D-glucosamine biosynthesis; alpha-D-glucosamine 6-phosphate from D-fructose 6-phosphate: step 1/1. Its function is as follows. Catalyzes the reversible conversion of alpha-D-glucosamine 6-phosphate (GlcN-6P) into beta-D-fructose 6-phosphate (Fru-6P) and ammonium ion, a regulatory reaction step in de novo uridine diphosphate-N-acetyl-alpha-D-glucosamine (UDP-GlcNAc) biosynthesis via hexosamine pathway. This is Glucosamine-6-phosphate deaminase (Gnpda1) from Aedes aegypti (Yellowfever mosquito).